The chain runs to 429 residues: Adenosylhomocysteinase (429 aa).

Substrate is bound by residues threonine 64, aspartate 136, and glutamate 161. Residue threonine 162 to threonine 164 participates in NAD(+) binding. Substrate is bound by residues lysine 191 and aspartate 195. Residues asparagine 196, glycine 225–glycine 230, glutamate 248, asparagine 283, serine 304–histidine 306, and asparagine 351 contribute to the NAD(+) site.

It belongs to the adenosylhomocysteinase family. It depends on NAD(+) as a cofactor.

The protein localises to the cytoplasm. The enzyme catalyses S-adenosyl-L-homocysteine + H2O = L-homocysteine + adenosine. It functions in the pathway amino-acid biosynthesis; L-homocysteine biosynthesis; L-homocysteine from S-adenosyl-L-homocysteine: step 1/1. In terms of biological role, may play a key role in the regulation of the intracellular concentration of adenosylhomocysteine. This is Adenosylhomocysteinase from Gloeothece citriformis (strain PCC 7424) (Cyanothece sp. (strain PCC 7424)).